A 286-amino-acid chain; its full sequence is uncharacterized protein (286 aa).

Residues 26–268 (PLIILCHGFC…DACHYDIYEG (243 aa)) enclose the AB hydrolase-1 domain.

The protein to E.coli YcjY.

This is an uncharacterized protein from Escherichia coli.